The sequence spans 186 residues: Peptidyl-tRNA hydrolase (186 aa).

Tyr-14 contacts tRNA. His-19 serves as the catalytic Proton acceptor. Positions 65, 67, and 113 each coordinate tRNA.

Belongs to the PTH family. In terms of assembly, monomer.

It is found in the cytoplasm. The catalysed reaction is an N-acyl-L-alpha-aminoacyl-tRNA + H2O = an N-acyl-L-amino acid + a tRNA + H(+). Its function is as follows. Hydrolyzes ribosome-free peptidyl-tRNAs (with 1 or more amino acids incorporated), which drop off the ribosome during protein synthesis, or as a result of ribosome stalling. Functionally, catalyzes the release of premature peptidyl moieties from peptidyl-tRNA molecules trapped in stalled 50S ribosomal subunits, and thus maintains levels of free tRNAs and 50S ribosomes. The chain is Peptidyl-tRNA hydrolase from Limosilactobacillus reuteri (strain DSM 20016) (Lactobacillus reuteri).